The primary structure comprises 483 residues: Probable glycine dehydrogenase (decarboxylating) subunit 2 (483 aa).

N6-(pyridoxal phosphate)lysine is present on Lys267.

The protein belongs to the GcvP family. C-terminal subunit subfamily. As to quaternary structure, the glycine cleavage system is composed of four proteins: P, T, L and H. In this organism, the P 'protein' is a heterodimer of two subunits. Pyridoxal 5'-phosphate serves as cofactor.

It catalyses the reaction N(6)-[(R)-lipoyl]-L-lysyl-[glycine-cleavage complex H protein] + glycine + H(+) = N(6)-[(R)-S(8)-aminomethyldihydrolipoyl]-L-lysyl-[glycine-cleavage complex H protein] + CO2. In terms of biological role, the glycine cleavage system catalyzes the degradation of glycine. The P protein binds the alpha-amino group of glycine through its pyridoxal phosphate cofactor; CO(2) is released and the remaining methylamine moiety is then transferred to the lipoamide cofactor of the H protein. The chain is Probable glycine dehydrogenase (decarboxylating) subunit 2 from Kosmotoga olearia (strain ATCC BAA-1733 / DSM 21960 / TBF 19.5.1).